The primary structure comprises 460 residues: MTTSHQPQDRYKAVWLIFFVLGLGTLLPWNFFMTATKYFTNRLDVSQNVSSDTDQSCESTKALADPTVALPARSSLSAIFNNVMTLCAMLPLLVFTCLNSFLHQRISQSVRILGSLLAILLVFLVTAALVKVEMDALIFFVITMIKIVLINSFGAILQASLFGLAGVLPANYTAPIMSGQGLAGFFTSVAMICAIASGSELSESAFGYFITACAVVILAILCYLALPRTEFYRHYLQLNLAGPAEQETKLDLISKGEEPKGRREESGVPGPNSPPTNRNQSIKAILKSICVPALSVCFIFTVTIGLFPAVTAEVESSIAGTSPWKSYFIPVACFLNFNVFDWLGRSLTAVCMWPGQDSRWLPVLVASRIVFIPLLMLCNVKARHCGAQRHHFVFKHDAWFIAFMAAFAFSNGYLASLCMCFGPKKVKPAEAETAGNIMSFFLCLGLALGAVLSFLLRALV.

The Cytoplasmic segment spans residues 1-12 (MTTSHQPQDRYK). A helical membrane pass occupies residues 13–29 (AVWLIFFVLGLGTLLPW). Topologically, residues 30-82 (NFFMTATKYFTNRLDVSQNVSSDTDQSCESTKALADPTVALPARSSLSAIFNN) are extracellular. Residue Asn48 is glycosylated (N-linked (GlcNAc...) asparagine). The helical transmembrane segment at 83–107 (VMTLCAMLPLLVFTCLNSFLHQRIS) threads the bilayer. Topologically, residues 108–111 (QSVR) are cytoplasmic. The helical transmembrane segment at 112–130 (ILGSLLAILLVFLVTAALV) threads the bilayer. Topologically, residues 131–138 (KVEMDALI) are extracellular. Residues 139–157 (FFVITMIKIVLINSFGAIL) traverse the membrane as a helical segment. At 158 to 174 (QASLFGLAGVLPANYTA) the chain is on the cytoplasmic side. Residues 175–199 (PIMSGQGLAGFFTSVAMICAIASGS) form a helical membrane-spanning segment. The Extracellular segment spans residues 200 to 206 (ELSESAF). A helical membrane pass occupies residues 207–227 (GYFITACAVVILAILCYLALP). Over 228-291 (RTEFYRHYLQ…IKAILKSICV (64 aa)) the chain is Cytoplasmic. Position 254 is a phosphoserine (Ser254). Positions 255–266 (KGEEPKGRREES) are enriched in basic and acidic residues. The segment at 255–277 (KGEEPKGRREESGVPGPNSPPTN) is disordered. Ser273 bears the Phosphoserine mark. A helical transmembrane segment spans residues 292–311 (PALSVCFIFTVTIGLFPAVT). The Extracellular segment spans residues 312 to 323 (AEVESSIAGTSP). A helical transmembrane segment spans residues 324 to 342 (WKSYFIPVACFLNFNVFDW). At 343-359 (LGRSLTAVCMWPGQDSR) the chain is on the cytoplasmic side. Residues 360-378 (WLPVLVASRIVFIPLLMLC) traverse the membrane as a helical segment. Residues 379–397 (NVKARHCGAQRHHFVFKHD) are Extracellular-facing. A helical membrane pass occupies residues 398-417 (AWFIAFMAAFAFSNGYLASL). Over 418-435 (CMCFGPKKVKPAEAETAG) the chain is Cytoplasmic. A helical membrane pass occupies residues 436–456 (NIMSFFLCLGLALGAVLSFLL). The Extracellular portion of the chain corresponds to 457–460 (RALV).

This sequence belongs to the SLC29A/ENT transporter (TC 2.A.57) family. In terms of assembly, identified in a complex with STOM. In terms of processing, glycosylated. Highly expressed in heart, spleen, lung, liver and testis. Lower level of expression in brain and kidney. Expressed in adipose tissues, brown adipocytes expressing significantly higher amounts than white adipocytes. Expressed in seminiferous tubules.

The protein localises to the basolateral cell membrane. Its subcellular location is the apical cell membrane. The protein resides in the cell membrane. It carries out the reaction adenosine(in) = adenosine(out). The catalysed reaction is guanosine(in) = guanosine(out). It catalyses the reaction inosine(in) = inosine(out). The enzyme catalyses uridine(out) = uridine(in). It carries out the reaction thymidine(in) = thymidine(out). The catalysed reaction is cytidine(in) = cytidine(out). It catalyses the reaction adenine(out) = adenine(in). The enzyme catalyses guanine(out) = guanine(in). It carries out the reaction thymine(out) = thymine(in). The catalysed reaction is uracil(in) = uracil(out). It catalyses the reaction hypoxanthine(out) = hypoxanthine(in). With respect to regulation, transporter activity is sensitive to low concentrations of the inhibitor nitrobenzylmercaptopurine riboside (NBMPR). Its function is as follows. Uniporter involved in the facilitative transport of nucleosides and nucleobases, and contributes to maintaining their cellular homeostasis. Functions as a Na(+)-independent transporter. Involved in the transport of nucleosides such as adenosine, guanosine, inosine, uridine, thymidine and cytidine. Also transports purine (hypoxanthine, adenine, guanine) and pyrimidine nucleobases (thymine, uracil). Mediates basolateral nucleoside uptake into Sertoli cells, thereby regulating the transport of nucleosides in testis across the blood-testis-barrier. Regulates inosine levels in brown adipocytes tissues (BAT) and extracellular inosine levels, which controls BAT-dependent energy expenditure. In Mus musculus (Mouse), this protein is Equilibrative nucleoside transporter 1.